We begin with the raw amino-acid sequence, 135 residues long: Biglycan (135 aa).

LRR repeat units follow at residues 4 to 24 (KLNY…DLPE), 25 to 46 (TLNE…DLLR), 49 to 72 (KLYR…SFLP), 73 to 95 (TLRE…PDLK), and 96 to 117 (LLQV…DFCP). An N-linked (GlcNAc...) asparagine glycan is attached at Asn-65. Asn-106 carries N-linked (GlcNAc...) asparagine glycosylation.

This sequence belongs to the small leucine-rich proteoglycan (SLRP) family. SLRP class I subfamily. In terms of assembly, homodimer. Forms a ternary complex with MFAP2 and ELN. In terms of processing, the two attached glycosaminoglycan chains can be either chondroitin sulfate or dermatan sulfate. As to expression, found in several connective tissues, especially in articular cartilages.

Its subcellular location is the secreted. The protein localises to the extracellular space. It is found in the extracellular matrix. May be involved in collagen fiber assembly. The chain is Biglycan (BGN) from Oryctolagus cuniculus (Rabbit).